Here is a 229-residue protein sequence, read N- to C-terminus: Somatolactin (229 aa).

The first 21 residues, 1-21 (MAALQEVLLAVLLWPVLVTIS), serve as a signal peptide directing secretion. 3 disulfide bridges follow: C26-C36, C87-C203, and C220-C228. A glycan (N-linked (GlcNAc...) asparagine) is linked at N143.

It belongs to the somatotropin/prolactin family. In terms of tissue distribution, pituitary gland.

It is found in the secreted. This chain is Somatolactin, found in Tetraodon miurus (Congo puffer).